A 942-amino-acid polypeptide reads, in one-letter code: Protein ZDS2 (942 aa).

Residues Met1 to Asn28 are disordered. Residues Thr15–Asn28 show a composition bias toward polar residues. Ser50 carries the phosphoserine modification. Disordered stretches follow at residues Ser91 to Ile142, Ser483 to Asn541, Val617 to Leu654, Val682 to Thr728, and Ser788 to Leu817. The segment covering Ser99–Gln122 has biased composition (basic and acidic residues). Over residues Gly123–Asp134 the composition is skewed to acidic residues. 3 stretches are compositionally biased toward low complexity: residues Ser483–Ser497, Ser518–Asn541, and Val617–Lys627. Basic residues predominate over residues Val682–Lys704. Residues Thr807–Thr816 show a composition bias toward polar residues.

This sequence to yeast ZDS1/NRC1/CES1. Interacts with SKG6.

In terms of biological role, acts as a negative regulator of polarized growth via an alternative mechanism to ZDS1. In heat-stressed cells appears to play a role in localizing BCY1 to the cytoplasm. Seems to interact with, and down-regulate, CDC42. Also acts as a suppressor of PKC1. May act as an integration point for distinct signaling pathways helping to maintain a balance among these different pathways. This Saccharomyces cerevisiae (strain ATCC 204508 / S288c) (Baker's yeast) protein is Protein ZDS2 (ZDS2).